A 530-amino-acid chain; its full sequence is Bifunctional purine biosynthesis protein PurH (530 aa).

The region spanning 1-148 (MNNARPIRRA…KNHKDVTIVV (148 aa)) is the MGS-like domain.

This sequence belongs to the PurH family.

It catalyses the reaction (6R)-10-formyltetrahydrofolate + 5-amino-1-(5-phospho-beta-D-ribosyl)imidazole-4-carboxamide = 5-formamido-1-(5-phospho-D-ribosyl)imidazole-4-carboxamide + (6S)-5,6,7,8-tetrahydrofolate. It carries out the reaction IMP + H2O = 5-formamido-1-(5-phospho-D-ribosyl)imidazole-4-carboxamide. It participates in purine metabolism; IMP biosynthesis via de novo pathway; 5-formamido-1-(5-phospho-D-ribosyl)imidazole-4-carboxamide from 5-amino-1-(5-phospho-D-ribosyl)imidazole-4-carboxamide (10-formyl THF route): step 1/1. Its pathway is purine metabolism; IMP biosynthesis via de novo pathway; IMP from 5-formamido-1-(5-phospho-D-ribosyl)imidazole-4-carboxamide: step 1/1. The polypeptide is Bifunctional purine biosynthesis protein PurH (Vibrio atlanticus (strain LGP32) (Vibrio splendidus (strain Mel32))).